Consider the following 370-residue polypeptide: Glutamate 5-kinase (370 aa).

Lysine 13 contacts ATP. The substrate site is built by serine 52, aspartate 139, and asparagine 151. ATP contacts are provided by residues 171–172 and 211–217; these read SD and SGGMKSK. Residues 275-353 form the PUA domain; sequence KGELVLDRGA…AEIEAVLGYR (79 aa).

It belongs to the glutamate 5-kinase family.

The protein resides in the cytoplasm. The catalysed reaction is L-glutamate + ATP = L-glutamyl 5-phosphate + ADP. It functions in the pathway amino-acid biosynthesis; L-proline biosynthesis; L-glutamate 5-semialdehyde from L-glutamate: step 1/2. Functionally, catalyzes the transfer of a phosphate group to glutamate to form L-glutamate 5-phosphate. In Thermus thermophilus (strain ATCC BAA-163 / DSM 7039 / HB27), this protein is Glutamate 5-kinase.